Here is a 151-residue protein sequence, read N- to C-terminus: S-protein homolog 74 (151 aa).

Positions 1–25 (MNYIKQFILAICFYLVLTCQDHVLA) are cleaved as a signal peptide.

Belongs to the plant self-incompatibility (S1) protein family.

The protein localises to the secreted. The protein is S-protein homolog 74 of Arabidopsis thaliana (Mouse-ear cress).